Reading from the N-terminus, the 186-residue chain is Glycerol-3-phosphate acyltransferase 1 (186 aa).

A run of 5 helical transmembrane segments spans residues 9-29 (MQFLYLVASYLFGNILTAYIV), 58-78 (GYFVATFLGDAIKGAIVVSIA), 85-105 (STFVMLTLLAVIIGHIYPVLF), 121-141 (IAFDYLIALTLVAVFIIFYLI), and 161-181 (ILYSYSIVTTILSALIIVLIL).

It belongs to the PlsY family. As to quaternary structure, probably interacts with PlsX.

The protein localises to the cell membrane. The enzyme catalyses an acyl phosphate + sn-glycerol 3-phosphate = a 1-acyl-sn-glycero-3-phosphate + phosphate. It functions in the pathway lipid metabolism; phospholipid metabolism. Functionally, catalyzes the transfer of an acyl group from acyl-phosphate (acyl-PO(4)) to glycerol-3-phosphate (G3P) to form lysophosphatidic acid (LPA). This enzyme utilizes acyl-phosphate as fatty acyl donor, but not acyl-CoA or acyl-ACP. In Bacillus cereus (strain ZK / E33L), this protein is Glycerol-3-phosphate acyltransferase 1.